The primary structure comprises 309 residues: Glutaminase 2 (309 aa).

Residues Ser-65, Asn-117, Glu-162, Asn-169, Tyr-193, Tyr-245, and Val-263 each coordinate substrate.

The protein belongs to the glutaminase family. As to quaternary structure, homotetramer.

It catalyses the reaction L-glutamine + H2O = L-glutamate + NH4(+). The chain is Glutaminase 2 from Bacillus subtilis (strain 168).